We begin with the raw amino-acid sequence, 93 residues long: Zinc metalloproteinase-disintegrin-like leucurogin (93 aa).

In terms of domain architecture, Disintegrin spans 8 to 93 (PPVCGNELLE…SECPADVGHK (86 aa)). Ca(2+) contacts are provided by valine 10, asparagine 13, leucine 15, glutamate 17, glutamate 20, and aspartate 23. 7 disulfides stabilise this stretch: cysteine 11-cysteine 40, cysteine 22-cysteine 35, cysteine 24-cysteine 30, cysteine 34-cysteine 57, cysteine 48-cysteine 54, cysteine 53-cysteine 79, and cysteine 66-cysteine 86. The D/ECD-tripeptide signature appears at 72–74 (ECD). Ca(2+) is bound by residues aspartate 74, proline 75, glutamate 77, aspartate 89, and valine 90. Residues 74–93 (DPAEHCTGQSSECPADVGHK) are disordered.

The protein belongs to the venom metalloproteinase (M12B) family. P-III subfamily. Monomer. Zn(2+) serves as cofactor. N-glycosylated. As to expression, expressed by the venom gland.

The protein localises to the secreted. Its function is as follows. Snake venom zinc metalloprotease that possesses hemorrhagic activity. The disintegrin-like domain has been expressed and named leucurogin. This recombinant disintegrin is able to inhibit collagen-induced platelet aggregation but not ADP- or arachidonic acid-induced platelet aggregation. Furthermore, it inhibits the adhesion of human fibroblasts to collagen type I. It also reduces adhesion and migration of human fibroblasts and inhibits migration and proliferation of human and mouse melanoma cell lines (BLM, and B16-F10-Nex2). In vitro, it inhibits the vascular structures formation by endothelial cells. In addition, it inhibits the growth of experimental Ehrlich tumor and has anti-angiogenesis effect on the sponge implant model. In vivo, when intraperitoneally injected into mice, it inhibits lung metastasis of B16F10 Nex-2 cells. In the treatment of human melanoma, grafted intradermally in the nude mice flank, it inhibits tumor growth. In Bothrops leucurus (Whitetail lancehead), this protein is Zinc metalloproteinase-disintegrin-like leucurogin.